We begin with the raw amino-acid sequence, 72 residues long: UPF0270 protein PM1156 (72 aa).

It belongs to the UPF0270 family.

This is UPF0270 protein PM1156 from Pasteurella multocida (strain Pm70).